The primary structure comprises 30 residues: GIPCGESCVWIPCLTSAIGCSCKSKVCYRD.

The cyclopeptide (Gly-Asp) cross-link spans 1-30; that stretch reads GIPCGESCVWIPCLTSAIGCSCKSKVCYRD. Cystine bridges form between Cys4–Cys20, Cys8–Cys22, and Cys13–Cys27.

In terms of processing, this is a cyclic peptide.

Its function is as follows. Probably participates in a plant defense mechanism. This chain is Cycloviolacin-O20, found in Viola odorata (Sweet violet).